Consider the following 257-residue polypeptide: MGRRTLSQRKGRGSIFKSRSHHKLGVAQHRAIDFFERHSTVRGLVKSIEHDPGRGAPLARVVFRNPRQYGLDKELFICAEGLYSGQYIYCGSKASLHIGNVLPIGQCPEGTVVCNVESKPGDRGIIARASGNYATVISHNADNETTRIRLPSGAKKTLKSNCRAMVGIIAGGGRTEKPILKAGVAYRMYKAKRTTWPRVRGVAMNPVDHPHGGGNHQHVGHPTTLKRSSPPGQKAGKVAARRTGLIRGGNKEGAADN.

The interval 207–257 (VDHPHGGGNHQHVGHPTTLKRSSPPGQKAGKVAARRTGLIRGGNKEGAADN) is disordered.

The protein belongs to the universal ribosomal protein uL2 family. As to quaternary structure, component of the large ribosomal subunit.

It localises to the cytoplasm. Functionally, component of the large ribosomal subunit. The ribosome is a large ribonucleoprotein complex responsible for the synthesis of proteins in the cell. In Entamoeba histolytica (strain ATCC 30459 / HM-1:IMSS / ABRM), this protein is Large ribosomal subunit protein uL2 (RPL8).